The primary structure comprises 66 residues: Surface composition regulator (66 aa).

The protein belongs to the GlgS family.

Functionally, major determinant of cell surface composition. Negatively regulates motility, adhesion and synthesis of biofilm exopolysaccharides. The protein is Surface composition regulator of Shigella dysenteriae serotype 1 (strain Sd197).